Consider the following 44-residue polypeptide: Photosystem I reaction center subunit IX (44 aa).

Residues 7-27 (YLSVAPVLSTLWFASLAGLLI) form a helical membrane-spanning segment.

It belongs to the PsaJ family.

It is found in the plastid. It localises to the chloroplast thylakoid membrane. Functionally, may help in the organization of the PsaE and PsaF subunits. This Barbarea verna (Land cress) protein is Photosystem I reaction center subunit IX.